A 118-amino-acid chain; its full sequence is Small ribosomal subunit protein uS13 (118 aa).

The segment at 92-118 (RKGLPVRGQRTKTNARTRKGPRKPIRK) is disordered.

It belongs to the universal ribosomal protein uS13 family. In terms of assembly, part of the 30S ribosomal subunit. Forms a loose heterodimer with protein S19. Forms two bridges to the 50S subunit in the 70S ribosome.

Located at the top of the head of the 30S subunit, it contacts several helices of the 16S rRNA. In the 70S ribosome it contacts the 23S rRNA (bridge B1a) and protein L5 of the 50S subunit (bridge B1b), connecting the 2 subunits; these bridges are implicated in subunit movement. Contacts the tRNAs in the A and P-sites. The sequence is that of Small ribosomal subunit protein uS13 from Pseudomonas putida (strain W619).